The following is a 116-amino-acid chain: Type IV narrow pilus major component PilA5 (116 aa).

Positions 1–5 (MRAKG) are cleaved as a propeptide — leader sequence. An N-methylphenylalanine modification is found at Phe-6. The chain crosses the membrane as a helical span at residues 6–26 (FTLIELAIVIVIIGILVAIAV).

Glycosylated.

The protein resides in the cell inner membrane. It localises to the cell outer membrane. It is found in the periplasm. In terms of biological role, plays an essential role in forming the main structure of the narrow T4P pili that participates in twitching motility. This Thermus thermophilus (strain ATCC BAA-163 / DSM 7039 / HB27) protein is Type IV narrow pilus major component PilA5 (pilA5).